The sequence spans 629 residues: tRNA uridine 5-carboxymethylaminomethyl modification enzyme MnmG (629 aa).

FAD is bound at residue G14–G19. Residue G274–F288 participates in NAD(+) binding.

Belongs to the MnmG family. As to quaternary structure, homodimer. Heterotetramer of two MnmE and two MnmG subunits. FAD is required as a cofactor.

Its subcellular location is the cytoplasm. In terms of biological role, NAD-binding protein involved in the addition of a carboxymethylaminomethyl (cmnm) group at the wobble position (U34) of certain tRNAs, forming tRNA-cmnm(5)s(2)U34. The polypeptide is tRNA uridine 5-carboxymethylaminomethyl modification enzyme MnmG (Xylella fastidiosa (strain 9a5c)).